The following is a 320-amino-acid chain: GPI-specific phospholipase A2-like PGAP3 (320 aa).

A signal peptide spans 1 to 20; sequence MAGLAARLVLLAGAAALASG. Residues 21–98 lie on the Lumenal side of the membrane; it reads SQGDREPVYR…QFHGKWPFSR (78 aa). Asn-40 carries N-linked (GlcNAc...) asparagine glycosylation. A helical membrane pass occupies residues 99-119; it reads FLFFQEPASAVASFLNGLASL. Over 120-135 the chain is Cytoplasmic; sequence VMLCRYRTFVPASSPM. Residues 136-156 form a helical membrane-spanning segment; sequence YHTCVAFAWVSLNAWFWSTVF. The Lumenal portion of the chain corresponds to 157 to 169; that stretch reads HTRDTDLTEKMDY. Residues 170–190 form a helical membrane-spanning segment; it reads FCASTVILHSIYLCCVRTVGL. At 191–193 the chain is on the cytoplasmic side; the sequence is QHP. The chain crosses the membrane as a helical span at residues 194 to 214; it reads AVVSAFRALLLLMLTVHVSYL. Residues 215-224 are Lumenal-facing; sequence SLIRFDYGYN. The helical transmembrane segment at 225–245 threads the bilayer; it reads LVANVAIGLVNVVWWLAWCLW. The Cytoplasmic segment spans residues 246 to 257; the sequence is NQRRLPHVRKCV. A helical transmembrane segment spans residues 258 to 278; sequence VVVLLLQGLSLLELLDFPPLF. Position 279 (Trp-279) is a topological domain, lumenal. A helical membrane pass occupies residues 280–299; sequence VLDAHAIWHISTIPVHVLFF. At 300–320 the chain is on the cytoplasmic side; sequence SFLEDDSLYLLKESEDKFKLD.

Belongs to the PGAP3 family. As to expression, ubiquitously expressed, with highest levels in thyroid and placenta.

It is found in the golgi apparatus membrane. In terms of biological role, involved in the fatty acid remodeling steps of GPI-anchor maturation where the unsaturated acyl chain at sn-2 of inositol phosphate is replaced by a saturated stearoyl chain. May catalyze the first step of the fatty acid remodeling, by removing the unsaturated acyl chain at sn-2 of inositol phosphate, generating a lyso-GPI intermediate. The fatty acid remodeling steps is critical for the integration of GPI-APs into lipid rafts. This is GPI-specific phospholipase A2-like PGAP3 from Homo sapiens (Human).